The chain runs to 264 residues: 3-methyl-2-oxobutanoate hydroxymethyltransferase (264 aa).

Positions 45 and 84 each coordinate Mg(2+). Residues 45–46 (DS), Asp-84, and Lys-112 contribute to the 3-methyl-2-oxobutanoate site. Mg(2+) is bound at residue Glu-114. Glu-181 serves as the catalytic Proton acceptor.

It belongs to the PanB family. Homodecamer; pentamer of dimers. Mg(2+) serves as cofactor.

It is found in the cytoplasm. The catalysed reaction is 3-methyl-2-oxobutanoate + (6R)-5,10-methylene-5,6,7,8-tetrahydrofolate + H2O = 2-dehydropantoate + (6S)-5,6,7,8-tetrahydrofolate. Its pathway is cofactor biosynthesis; (R)-pantothenate biosynthesis; (R)-pantoate from 3-methyl-2-oxobutanoate: step 1/2. Functionally, catalyzes the reversible reaction in which hydroxymethyl group from 5,10-methylenetetrahydrofolate is transferred onto alpha-ketoisovalerate to form ketopantoate. The sequence is that of 3-methyl-2-oxobutanoate hydroxymethyltransferase from Shewanella sediminis (strain HAW-EB3).